Here is a 432-residue protein sequence, read N- to C-terminus: Tyrosine--tRNA ligase (432 aa).

Residue Y35 participates in L-tyrosine binding. The short motif at 40–49 is the 'HIGH' region element; it reads PTAGSLHVGH. The L-tyrosine site is built by Y175 and Q179. A 'KMSKS' region motif is present at residues 239 to 243; sequence KFGKT. K242 contributes to the ATP binding site. Residues 365 to 422 form the S4 RNA-binding domain; sequence PPLVDLFASTGLVPSKSAARRTIQEGGAYLNNAKVTDIEARVSEADLLHGRYLVLRRG.

The protein belongs to the class-I aminoacyl-tRNA synthetase family. TyrS type 1 subfamily. As to quaternary structure, homodimer.

It is found in the cytoplasm. It catalyses the reaction tRNA(Tyr) + L-tyrosine + ATP = L-tyrosyl-tRNA(Tyr) + AMP + diphosphate + H(+). In terms of biological role, catalyzes the attachment of tyrosine to tRNA(Tyr) in a two-step reaction: tyrosine is first activated by ATP to form Tyr-AMP and then transferred to the acceptor end of tRNA(Tyr). In Thermobifida fusca (strain YX), this protein is Tyrosine--tRNA ligase.